The sequence spans 96 residues: UPF0166 protein aq_448 (96 aa).

It belongs to the UPF0166 family.

The polypeptide is UPF0166 protein aq_448 (Aquifex aeolicus (strain VF5)).